The primary structure comprises 639 residues: MGKIIGIDLGTTNSCVAVLDGGKARVLENAEGDRTTPSIIAYTDDETIVGSPAKRQAVTNPTNTFFAIKRLIGRRFKDDEVQRDVNIMPFKIIAADNGDAWVESRGNKMAPPQVSAEILKKMKKTAEDFLGEEVTEAVITVPAYFNDSQRQATKDAGRIAGLDVKRIINEPTAAALAYGIDKKQGDNIVAVYDLGGGTFDISIIEIDSNDGDQTFEVLATNGDTHLGGEDFDNRLINYLADEFKKEQGLDLRKDPLAMQRLKEAAEKAKIELSSTNHTEVNLPYITADATGPKHLVIKITRAKLESLVEDLILRTLEPLKVALADADLSVTDINEVILVGGQTRMPKVQEAVTNFFGKEPRKDVNPDEAVAVGAAIQAGVLSGDVKDVLLLDVTPLSLGIETMGSVMTKLIEKNTTIPTKAQQVFSTADDNQSAVTIHVLQGERKQASANKSLGQFNLDGIEPAQRGQPQIEVMFDIDADGILHVSATDKKTGKKQNITIKASSGLSEEEVAQMVRDAEAHADEDKKFEELVQSRNQADGLVHATKKQVEEAGDALPSEDKEKIQAAMDAVDTAIKGNDKEAIEKATQELIEASAKLMEIAQAKSQAQGGDNADAGKQANATADDVVDAEFEEVKDDKK.

A Phosphothreonine; by autocatalysis modification is found at Thr-198. Positions 602-639 are disordered; that stretch reads QAKSQAQGGDNADAGKQANATADDVVDAEFEEVKDDKK. Over residues 625-639 the composition is skewed to acidic residues; it reads DVVDAEFEEVKDDKK.

Belongs to the heat shock protein 70 family.

Its function is as follows. Acts as a chaperone. This Shewanella baltica (strain OS155 / ATCC BAA-1091) protein is Chaperone protein DnaK.